A 58-amino-acid polypeptide reads, in one-letter code: TTACCNFCPCTRSIPPQCRCTDIGETCHSACKTCLCTKSIPPQCHCADITNFCYPKCN.

Disulfide bonds link Cys4–Cys57, Cys5–Cys20, Cys8–Cys53, Cys10–Cys18, Cys27–Cys34, Cys31–Cys46, and Cys36–Cys44.

This sequence belongs to the Bowman-Birk serine protease inhibitor family.

This chain is Bowman-Birk type wound-induced trypsin inhibitor, found in Medicago sativa (Alfalfa).